Consider the following 96-residue polypeptide: Small ribosomal subunit protein bS6 (96 aa).

This sequence belongs to the bacterial ribosomal protein bS6 family.

In terms of biological role, binds together with bS18 to 16S ribosomal RNA. This is Small ribosomal subunit protein bS6 from Streptococcus uberis (strain ATCC BAA-854 / 0140J).